The chain runs to 188 residues: Insulin-like peptide INSL6 (188 aa).

Positions 1–22 (MKQLCCSCLLWLGLLLAPFSQE) are cleaved as a signal peptide. 3 disulfides stabilise this stretch: Cys-33–Cys-169, Cys-45–Cys-182, and Cys-168–Cys-173. Positions 53-158 (FSMEEQSPMT…SGLFWGNHPQ (106 aa)) are cleaved as a propeptide — connecting peptide.

Belongs to the insulin family. In terms of tissue distribution, testis and prostate specific.

The protein localises to the secreted. May have a role in sperm development and fertilization. In Rattus norvegicus (Rat), this protein is Insulin-like peptide INSL6 (Insl6).